The primary structure comprises 318 residues: Ribose-phosphate pyrophosphokinase 2 (318 aa).

96-101 serves as a coordination point for ATP; that stretch reads RQDKKD. Residues Asp-128, His-130, Asp-139, and Asp-143 each contribute to the Mg(2+) site. His-130 contacts ATP. The segment at 212–227 is binding of phosphoribosylpyrophosphate; the sequence is KDRVAILVDDMADTCG.

It belongs to the ribose-phosphate pyrophosphokinase family. Homodimer. The active form is probably a hexamer composed of 3 homodimers. The cofactor is Mg(2+).

It carries out the reaction D-ribose 5-phosphate + ATP = 5-phospho-alpha-D-ribose 1-diphosphate + AMP + H(+). The protein operates within metabolic intermediate biosynthesis; 5-phospho-alpha-D-ribose 1-diphosphate biosynthesis; 5-phospho-alpha-D-ribose 1-diphosphate from D-ribose 5-phosphate (route I): step 1/1. Activated by magnesium and inorganic phosphate. Competitively or non-competitively inhibited by ADP, 2,3-bisphosphoglyceride or GDP. Catalyzes the synthesis of phosphoribosylpyrophosphate (PRPP) that is essential for nucleotide synthesis. The chain is Ribose-phosphate pyrophosphokinase 2 (prps2) from Xenopus laevis (African clawed frog).